A 444-amino-acid chain; its full sequence is MVKTEICGKGSSQGSEEERLSQLPDHLICVILSHLSTKDAVRTSILSTRWRNLWQLVPVLDFDSRELRSFSEFVSFAGSFFYLHKDSYIQKLRVCIYDLAGNYYLTSWIDLVTRHRIQHIDISVFTCSGFGVIPLSLYTCDTLVHLKLSRVTMVNVEFVSLPCLKILDLDFVNFTNETTLDKIISCSPVLEELTIVKSSEDNVKIIQVRSQTLKRVEIHRRFDRHNGLVIDTPLLQFLSIKAHSIKSIEFINLGFTTKVDIDVNLLDPNDLSNRSMTRDFFTTISRVRSLVIRHGTIKDIFHYMELEPLQQFCYLSELSAVCSISNLEMLLNLLKSCPKLESLSLKLVDYEKNKKEEVMSSTVPPPCLVSSLKFVKLESQLLGCGTELKVARYFLENSTILEKLTLKIDYMYKDEANVNHIRQTLHAVPRCSSTCEVVIHSLLY.

In terms of domain architecture, F-box spans Glu-17–Asp-63. LRR repeat units lie at residues Tyr-103–Ser-123, Val-124–Arg-150, Val-151–Phe-171, Val-172–Lys-197, Ser-199–Arg-224, Asn-226–Asn-252, Asn-273–Asp-299, Ile-300–Val-321, Cys-322–Leu-347, Val-369–Glu-396, and Ser-398–Gln-423. An FBD domain is found at Glu-356–Ile-408.

In Arabidopsis thaliana (Mouse-ear cress), this protein is F-box/FBD/LRR-repeat protein At5g53840.